The primary structure comprises 481 residues: Beta-1,3-glucan-binding protein (481 aa).

A signal peptide spans 1–18; the sequence is RCARVCAVLFLFIQISYG. Residues 20–120 form the CBM39 domain; sequence YQVPQVTVQA…LSFTVSALED (101 aa). Asn-110 carries N-linked (GlcNAc...) asparagine glycosylation. The region spanning 124–481 is the GH16 domain; that stretch reads TGTGTDPVPT…LVDYVKVVAL (358 aa).

This sequence belongs to the insect beta-1,3-glucan binding protein family.

The protein localises to the secreted. Involved in the recognition of invading microorganisms. Binds specifically to beta-1,3-glucan and activates the phenoloxidase cascade. In Hyphantria cunea (Fall webworm moth), this protein is Beta-1,3-glucan-binding protein.